A 490-amino-acid polypeptide reads, in one-letter code: Ribosome biogenesis protein YTM1 (490 aa).

Residues 1–22 (MDGLEDGPLDASTATSQKPQRQ) are disordered. The ubiquitin-like (UBL) domain stretch occupies residues 23 to 104 (VRLKLTSRHE…ETTLDVEYVR (82 aa)). 7 WD repeats span residues 116 to 168 (LHDD…IALS), 175 to 213 (GHTA…DGFS), 224 to 263 (GHKG…NPAA), 298 to 338 (SHTA…LVDT), 340 to 379 (TASH…TTVS), 385 to 425 (GHTN…TDKD), and 449 to 487 (GEGV…PNGG). The segment at 255 to 286 (TRKSENPAAPESLLPSNTSRSSKRRKLNSSVS) is disordered.

Belongs to the WD repeat WDR12/YTM1 family. As to quaternary structure, component of the NOP7 complex, composed of ERB1, NOP7 and YTM1. The complex is held together by ERB1, which interacts with NOP7 via its N-terminal domain and with YTM1 via a high-affinity interaction between the seven-bladed beta-propeller domains of the 2 proteins. The NOP7 complex associates with the 66S pre-ribosome. Interacts (via UBL domain) with MDN1 (via VWFA/MIDAS domain).

It localises to the nucleus. Its subcellular location is the nucleolus. It is found in the nucleoplasm. In terms of biological role, component of the NOP7 complex, which is required for maturation of the 25S and 5.8S ribosomal RNAs and formation of the 60S ribosome. The sequence is that of Ribosome biogenesis protein YTM1 from Ajellomyces capsulatus (strain NAm1 / WU24) (Darling's disease fungus).